The sequence spans 163 residues: 3-hydroxyacyl-[acyl-carrier-protein] dehydratase FabZ (163 aa).

His-58 is a catalytic residue.

It belongs to the thioester dehydratase family. FabZ subfamily.

The protein resides in the cytoplasm. It catalyses the reaction a (3R)-hydroxyacyl-[ACP] = a (2E)-enoyl-[ACP] + H2O. Functionally, involved in unsaturated fatty acids biosynthesis. Catalyzes the dehydration of short chain beta-hydroxyacyl-ACPs and long chain saturated and unsaturated beta-hydroxyacyl-ACPs. The protein is 3-hydroxyacyl-[acyl-carrier-protein] dehydratase FabZ of Francisella philomiragia subsp. philomiragia (strain ATCC 25017 / CCUG 19701 / FSC 153 / O#319-036).